The primary structure comprises 404 residues: Keratin, type I microfibrillar, 47.6 kDa (404 aa).

A head region spans residues M1–E56. The region spanning E56–L367 is the IF rod domain. Residues K57–R91 form a coil 1A region. The interval S92–N102 is linker 1. Residues Y103 to S203 form a coil 1B region. The segment at Q204 to V219 is linker 12. Residues D220–E363 form a coil 2 region. The interval D364 to H404 is tail.

The protein belongs to the intermediate filament family.

Its function is as follows. Wool microfibrillar keratin. The chain is Keratin, type I microfibrillar, 47.6 kDa from Ovis aries (Sheep).